We begin with the raw amino-acid sequence, 151 residues long: uncharacterized protein (151 aa).

This is an uncharacterized protein from Rhodobacter capsulatus (Rhodopseudomonas capsulata).